The following is a 136-amino-acid chain: Photosystem II extrinsic protein U (136 aa).

The first 28 residues, 1–28 (MKQLAQRLFSLALVLALVLGISVQSAQA), serve as a signal peptide directing secretion.

It belongs to the PsbU family. In terms of assembly, PSII is composed of 1 copy each of membrane proteins PsbA, PsbB, PsbC, PsbD, PsbE, PsbF, PsbH, PsbI, PsbJ, PsbK, PsbL, PsbM, PsbT, PsbX, PsbY, PsbZ, Psb30/Ycf12, peripheral proteins PsbO, CyanoQ (PsbQ), PsbU, PsbV and a large number of cofactors. It forms dimeric complexes.

The protein localises to the cellular thylakoid membrane. One of the extrinsic, lumenal subunits of photosystem II (PSII). PSII is a light-driven water plastoquinone oxidoreductase, using light energy to abstract electrons from H(2)O, generating a proton gradient subsequently used for ATP formation. The extrinsic proteins stabilize the structure of photosystem II oxygen-evolving complex (OEC), the ion environment of oxygen evolution and protect the OEC against heat-induced inactivation. In Synechococcus elongatus (strain ATCC 33912 / PCC 7942 / FACHB-805) (Anacystis nidulans R2), this protein is Photosystem II extrinsic protein U.